The sequence spans 369 residues: DNA replication and repair protein RecF (369 aa).

30-37 (GDNAQGKT) serves as a coordination point for ATP.

The protein belongs to the RecF family.

It is found in the cytoplasm. Its function is as follows. The RecF protein is involved in DNA metabolism; it is required for DNA replication and normal SOS inducibility. RecF binds preferentially to single-stranded, linear DNA. It also seems to bind ATP. This chain is DNA replication and repair protein RecF, found in Streptococcus equi subsp. zooepidemicus (strain H70).